We begin with the raw amino-acid sequence, 157 residues long: Protein Smg homolog (157 aa).

The protein belongs to the Smg family.

This Xylella fastidiosa (strain M23) protein is Protein Smg homolog.